A 232-amino-acid polypeptide reads, in one-letter code: tRNA (guanine-N(1)-)-methyltransferase (232 aa).

S-adenosyl-L-methionine is bound by residues Gly112 and 132-137; that span reads IGDYVL.

The protein belongs to the RNA methyltransferase TrmD family. In terms of assembly, homodimer.

The protein resides in the cytoplasm. The catalysed reaction is guanosine(37) in tRNA + S-adenosyl-L-methionine = N(1)-methylguanosine(37) in tRNA + S-adenosyl-L-homocysteine + H(+). Its function is as follows. Specifically methylates guanosine-37 in various tRNAs. The polypeptide is tRNA (guanine-N(1)-)-methyltransferase (Anaplasma phagocytophilum (strain HZ)).